Here is a 763-residue protein sequence, read N- to C-terminus: Ethylene receptor 2 (763 aa).

3 helical membrane-spanning segments follow: residues 58–78 (FLIA…ATCS), 86–106 (IVLQ…ITMF), and 115–135 (VVLA…ATAI). Residues Cys97 and His101 each contribute to the Cu cation site. The GAF domain occupies 190 to 339 (DRHTILYTTM…VVADQVAVAL (150 aa)). Residues 382 to 615 (AMYDGMRRPM…TIMLALQFQL (234 aa)) enclose the Histidine kinase domain. Residues 641-760 (QVILVDSDDT…ALGDELYRVL (120 aa)) enclose the Response regulatory domain. Position 692 is a 4-aspartylphosphate (Asp692).

It belongs to the ethylene receptor family. Cu cation serves as cofactor. In terms of tissue distribution, expressed in anthers and hulls.

Its subcellular location is the endoplasmic reticulum membrane. The enzyme catalyses ATP + protein L-histidine = ADP + protein N-phospho-L-histidine.. Ethylene receptor related to bacterial two-component regulators. Acts as a negative regulator of ethylene signaling. May delay the transition from the vegetative stage to the floral stage by up-regulating GI (GIGANTEA) and RCN1 and cause starch accumulation in stems by down-regulating the alpha-amylase AMY3D. In Oryza sativa subsp. indica (Rice), this protein is Ethylene receptor 2.